Consider the following 525-residue polypeptide: Sensory neuron membrane protein 1 (525 aa).

At Met1 to Ala11 the chain is on the cytoplasmic side. Residues Ile12–Leu32 form a helical membrane-spanning segment. Residues Lys33 to Arg456 are Extracellular-facing. 3 N-linked (GlcNAc...) asparagine glycosylation sites follow: Asn67, Asn229, and Asn324. Cystine bridges form between Cys268–Cys333, Cys297–Cys352, and Cys335–Cys341. A glycan (N-linked (GlcNAc...) asparagine) is linked at Asn440. Residues Val457–Ile477 form a helical membrane-spanning segment. Residues Val478–Ile525 lie on the Cytoplasmic side of the membrane. Positions Ser497 to Ile525 are disordered.

This sequence belongs to the CD36 family.

Its subcellular location is the cell membrane. Its function is as follows. Plays an olfactory role that is not restricted to pheromone sensitivity. This is Sensory neuron membrane protein 1 from Mamestra brassicae (Cabbage moth).